The following is a 424-amino-acid chain: Arginine ADP-riboxanase OspC4 (424 aa).

The NAD(+) site is built by H85, Q86, S87, L91, I104, N114, F130, H148, F153, D173, and E268. Residue E268 is part of the active site. ANK repeat units follow at residues 311 to 340 (MAHQ…FTKQ), 355 to 386 (NLYD…DVNK), and 393 to 422 (SGDT…GIRQ).

It belongs to the OspC family.

Its subcellular location is the secreted. The protein resides in the host cytoplasm. It catalyses the reaction L-arginyl-[protein] + NAD(+) = ADP-riboxanated L-argininyl-[protein] + nicotinamide + NH4(+) + H(+). In terms of biological role, ADP-riboxanase effector that mediates arginine ADP-riboxanation of host caspase CASP4/CASP11, thereby inhibiting pyroptosis. This is Arginine ADP-riboxanase OspC4 from Shigella flexneri.